Here is a 117-residue protein sequence, read N- to C-terminus: Small ribosomal subunit protein bS18c (117 aa).

Residues 86 to 117 (SELTPRTNALKARNKNKQNKYQNNQTKFLSNF) are disordered.

It belongs to the bacterial ribosomal protein bS18 family. In terms of assembly, part of the 30S ribosomal subunit.

It is found in the plastid. The chain is Small ribosomal subunit protein bS18c from Cuscuta exaltata (Tall dodder).